The primary structure comprises 347 residues: KRR1 small subunit processome component homolog (347 aa).

Residues 124-194 (GCDIIKIGNL…VRDIVLETMN (71 aa)) form the KH domain. Residues 231–246 (NKNLSKRKQPKVKKPK) show a composition bias toward basic residues. The disordered stretch occupies residues 231 to 347 (NKNLSKRKQP…LLKANKKSKS (117 aa)). Residues 271-304 (FLNKEQKQAKRQQERQTKQAEAAKKQDERRNKDF) adopt a coiled-coil conformation. Composition is skewed to basic and acidic residues over residues 272 to 303 (LNKE…RNKD) and 318 to 329 (KANDNDSSDSRV). The segment covering 337–347 (KLLKANKKSKS) has biased composition (basic residues).

It belongs to the KRR1 family. Monomer. Component of the ribosomal small subunit (SSU) processome.

The protein resides in the nucleus. The protein localises to the nucleolus. Its function is as follows. Required for 40S ribosome biogenesis. Involved in nucleolar processing of pre-18S ribosomal RNA and ribosome assembly. Binds to RNA. Required for female germline development, cell viability during eye development and for survival of dividing cells and epithelial cells during early wing disk development. The protein is KRR1 small subunit processome component homolog of Drosophila willistoni (Fruit fly).